Here is a 217-residue protein sequence, read N- to C-terminus: 3,4-dihydroxy-2-butanone 4-phosphate synthase (217 aa).

Residues 37 to 38 (RE), Asp42, 150 to 154 (RRGHT), and Glu174 contribute to the D-ribulose 5-phosphate site. Residue Glu38 participates in Mg(2+) binding. Residue His153 coordinates Mg(2+).

This sequence belongs to the DHBP synthase family. In terms of assembly, homodimer. Mg(2+) is required as a cofactor. It depends on Mn(2+) as a cofactor.

The enzyme catalyses D-ribulose 5-phosphate = (2S)-2-hydroxy-3-oxobutyl phosphate + formate + H(+). Its pathway is cofactor biosynthesis; riboflavin biosynthesis; 2-hydroxy-3-oxobutyl phosphate from D-ribulose 5-phosphate: step 1/1. In terms of biological role, catalyzes the conversion of D-ribulose 5-phosphate to formate and 3,4-dihydroxy-2-butanone 4-phosphate. In Shewanella sp. (strain W3-18-1), this protein is 3,4-dihydroxy-2-butanone 4-phosphate synthase.